A 784-amino-acid polypeptide reads, in one-letter code: Endonuclease MutS2 (784 aa).

335–342 contributes to the ATP binding site; that stretch reads GPNTGGKT. The Smr domain maps to 709–784; that stretch reads LDLRGERYED…GTGVTIVELK (76 aa).

It belongs to the DNA mismatch repair MutS family. MutS2 subfamily. Homodimer. Binds to stalled ribosomes, contacting rRNA.

In terms of biological role, endonuclease that is involved in the suppression of homologous recombination and thus may have a key role in the control of bacterial genetic diversity. Functionally, acts as a ribosome collision sensor, splitting the ribosome into its 2 subunits. Detects stalled/collided 70S ribosomes which it binds and splits by an ATP-hydrolysis driven conformational change. Acts upstream of the ribosome quality control system (RQC), a ribosome-associated complex that mediates the extraction of incompletely synthesized nascent chains from stalled ribosomes and their subsequent degradation. Probably generates substrates for RQC. This Geobacillus kaustophilus (strain HTA426) protein is Endonuclease MutS2.